A 713-amino-acid polypeptide reads, in one-letter code: Glutamine-dependent NAD(+) synthetase (713 aa).

A CN hydrolase domain is found at 4–275 (VTLATCNLNQ…IEVITATVDL (272 aa)). The Proton acceptor; for glutaminase activity role is filled by E44. Catalysis depends on K114, which acts as the For glutaminase activity. Catalysis depends on C175, which acts as the Nucleophile; for glutaminase activity. The interval 324–703 (YNTPAEEIGF…QRPQLKNTVN (380 aa)) is ligase. 354-361 (PLSGGADS) is an ATP binding site. S356 is an active-site residue.

The protein in the C-terminal section; belongs to the NAD synthetase family.

The enzyme catalyses deamido-NAD(+) + L-glutamine + ATP + H2O = L-glutamate + AMP + diphosphate + NAD(+) + H(+). It participates in cofactor biosynthesis; NAD(+) biosynthesis; NAD(+) from deamido-NAD(+) (L-Gln route): step 1/1. This is Glutamine-dependent NAD(+) synthetase (nadsyn1) from Dictyostelium discoideum (Social amoeba).